Reading from the N-terminus, the 200-residue chain is Pyridoxal 5'-phosphate synthase subunit PdxT (200 aa).

52–54 (GES) serves as a coordination point for L-glutamine. Residue Cys-84 is the Nucleophile of the active site. Residues Arg-115 and 143–144 (IR) contribute to the L-glutamine site. Active-site charge relay system residues include His-179 and Glu-181.

It belongs to the glutaminase PdxT/SNO family. As to quaternary structure, in the presence of PdxS, forms a dodecamer of heterodimers. Only shows activity in the heterodimer.

The enzyme catalyses aldehydo-D-ribose 5-phosphate + D-glyceraldehyde 3-phosphate + L-glutamine = pyridoxal 5'-phosphate + L-glutamate + phosphate + 3 H2O + H(+). It catalyses the reaction L-glutamine + H2O = L-glutamate + NH4(+). Its pathway is cofactor biosynthesis; pyridoxal 5'-phosphate biosynthesis. Its function is as follows. Catalyzes the hydrolysis of glutamine to glutamate and ammonia as part of the biosynthesis of pyridoxal 5'-phosphate. The resulting ammonia molecule is channeled to the active site of PdxS. The polypeptide is Pyridoxal 5'-phosphate synthase subunit PdxT (Methanosarcina barkeri (strain Fusaro / DSM 804)).